The following is a 186-amino-acid chain: Ribonuclease HII (186 aa).

The RNase H type-2 domain occupies 2 to 186 (KILAGVDEVG…KTFSPISDLL (185 aa)). 3 residues coordinate a divalent metal cation: Asp-8, Glu-9, and Asp-99.

It belongs to the RNase HII family. Requires Mn(2+) as cofactor. The cofactor is Mg(2+).

It is found in the cytoplasm. It carries out the reaction Endonucleolytic cleavage to 5'-phosphomonoester.. Endonuclease that specifically degrades the RNA of RNA-DNA hybrids. This is Ribonuclease HII from Pelagibacter ubique (strain HTCC1062).